The following is a 408-amino-acid chain: Peptidase T (408 aa).

Position 78 (histidine 78) interacts with Zn(2+). Aspartate 80 is an active-site residue. A Zn(2+)-binding site is contributed by aspartate 141. Residue glutamate 175 is the Proton acceptor of the active site. Glutamate 176, aspartate 198, and histidine 380 together coordinate Zn(2+).

The protein belongs to the peptidase M20B family. It depends on Zn(2+) as a cofactor.

The protein resides in the cytoplasm. The catalysed reaction is Release of the N-terminal residue from a tripeptide.. In terms of biological role, cleaves the N-terminal amino acid of tripeptides. The sequence is that of Peptidase T from Clostridium acetobutylicum (strain ATCC 824 / DSM 792 / JCM 1419 / IAM 19013 / LMG 5710 / NBRC 13948 / NRRL B-527 / VKM B-1787 / 2291 / W).